We begin with the raw amino-acid sequence, 191 residues long: MGKKLVMAQKRGETRALCLGVAMVMCAVIAYYILGTTMLPLYQKSVWTQKSTCHLIETNIREQEELEGKKVPQYPCLWVNVSAVGRWAVLYHTEDTRDQNHQCSYIPGSLENYQVARADVEKVKAKFHEQQIFYCFSTTRENETTVLYRRLYGPQTLLFSLFWPTFLLTGGLLIIAMVKINQSLSILAAQR.

Residues 1 to 15 (MGKKLVMAQKRGETR) are Cytoplasmic-facing. Residues 16 to 36 (ALCLGVAMVMCAVIAYYILGT) traverse the membrane as a helical segment. Over 37–157 (TMLPLYQKSV…YRRLYGPQTL (121 aa)) the chain is Extracellular. N-linked (GlcNAc...) asparagine glycans are attached at residues N80 and N142. A helical transmembrane segment spans residues 158-178 (LFSLFWPTFLLTGGLLIIAMV). Topologically, residues 179-191 (KINQSLSILAAQR) are cytoplasmic.

It belongs to the KCNMB (TC 8.A.14.1) family. KCNMB1 subfamily. Interacts with KCNMA1 tetramer. There are probably 4 molecules of KCMNB1 per KCNMA1 tetramer. Post-translationally, N-glycosylated.

The protein resides in the membrane. Its function is as follows. Regulatory subunit of the calcium activated potassium KCNMA1 (maxiK) channel. Modulates the calcium sensitivity and gating kinetics of KCNMA1, thereby contributing to KCNMA1 channel diversity. Increases the apparent Ca(2+)/voltage sensitivity of the KCNMA1 channel. It also modifies KCNMA1 channel kinetics and alters its pharmacological properties. It slows down the activation and the deactivation kinetics of the channel. Acts as a negative regulator of smooth muscle contraction by enhancing the calcium sensitivity to KCNMA1. Its presence is also a requirement for internal binding of the KCNMA1 channel opener dehydrosoyasaponin I (DHS-1) triterpene glycoside and for external binding of the agonist hormone 17-beta-estradiol (E2). Increases the binding activity of charybdotoxin (CTX) toxin to KCNMA1 peptide blocker by increasing the CTX association rate and decreasing the dissociation rate. The sequence is that of Calcium-activated potassium channel subunit beta-1 (KCNMB1) from Canis lupus familiaris (Dog).